Consider the following 394-residue polypeptide: RILP-like protein 1 (394 aa).

The 88-residue stretch at 2–89 (EGISALEKNV…RLERMDRIEK (88 aa)) folds into the RH1 domain. Residues 68–312 (EMEELRLELD…KVFMLQEELA (245 aa)) are a coiled coil. Residues 282–347 (RPRFTLQELR…IPQESGIKRL (66 aa)) form the RH2 domain. The disordered stretch occupies residues 318-337 (EADEEHKLPQSSPVIDSKAP).

The protein belongs to the RILPL family.

It is found in the cytoplasm. The protein resides in the cytosol. It localises to the cytoskeleton. The protein localises to the microtubule organizing center. Its subcellular location is the centrosome. It is found in the cell projection. The protein resides in the cilium. Functionally, plays a role in the regulation of cell shape and polarity. Plays a role in cellular protein transport, including protein transport away from primary cilia. Neuroprotective protein. This chain is RILP-like protein 1 (rilpl1), found in Xenopus tropicalis (Western clawed frog).